Here is a 195-residue protein sequence, read N- to C-terminus: Nuclear transcription factor Y subunit C-10 (195 aa).

The disordered stretch occupies residues 1–24 (MRRPKSSHVRMEPVAPRSHNTMPM).

The protein belongs to the NFYC/HAP5 subunit family. Heterotrimeric transcription factor composed of three components, NF-YA, NF-YB and NF-YC. NF-YB and NF-YC must interact and dimerize for NF-YA association and DNA binding.

It is found in the nucleus. In terms of biological role, stimulates the transcription of various genes by recognizing and binding to a CCAAT motif in promoters. The polypeptide is Nuclear transcription factor Y subunit C-10 (NFYC10) (Arabidopsis thaliana (Mouse-ear cress)).